A 356-amino-acid chain; its full sequence is Testis-expressed protein 19.1 (356 aa).

An interaction with LIRE1 region spans residues 1-78 (MCPPVSVRHG…WDAEPMEHLS (78 aa)). Residues 59 to 72 (LSEEEEEEEVWDAE) are compositionally biased toward acidic residues. Residues 59-107 (LSEEEEEEEVWDAEPMEHLSESESLESDSKQDAGSEQDAGSEPNTRSEQ) form a disordered region. Basic and acidic residues predominate over residues 73-91 (PMEHLSESESLESDSKQDA). Residues 139–186 (QWVVFSISVPTELLPQEAVPLDLGPEDVEWTQALPWRLDVLFPCSHRL) form an important for interaction with piRNA region.

Interacts with UBR2; does not lead to Tex19.1 degradation and stabilizes it. Interacts with piRNA-associated proteins DDX4, EDC4, MAEL, PIWIL1, PIWIL2, RANBP9 and TDRD6. Interacts with L1RE1.

It is found in the cytoplasm. Functionally, required during spermatogenesis and placenta development, participating in the repression of retrotransposable elements and prevent their mobilization. Collaborates with the Piwi-interacting RNA (piRNA) pathway, which mediates the repression of transposable elements during meiosis by forming complexes composed of piRNAs and Piwi proteins. Interacts with Piwi proteins and directly binds piRNAs, a class of 24 to 30 nucleotide RNAs that are generated by a Dicer-independent mechanism and are primarily derived from transposons and other repeated sequence elements. Also during spermatogenesis, promotes, with UBR2, SPO11-dependent recombination foci to accumulate and drive robust homologous chromosome synapsis. Interacts with LINE-1 retrotransposon encoded LIRE1, stimulates LIRE1 polyubiquitination, mediated by UBR2, and degradation, inhibiting LINE-1 retrotransposon mobilization. This is Testis-expressed protein 19.1 (Tex19.1) from Rattus norvegicus (Rat).